The primary structure comprises 499 residues: Maturase K (499 aa).

The protein belongs to the intron maturase 2 family. MatK subfamily.

It is found in the plastid. Its subcellular location is the chloroplast. Functionally, usually encoded in the trnK tRNA gene intron. Probably assists in splicing its own and other chloroplast group II introns. This chain is Maturase K, found in Gleditsia triacanthos (Common honey-locust).